Consider the following 667-residue polypeptide: WD repeat-containing protein 48 homolog (667 aa).

8 WD repeats span residues 26–65 (QHRN…NDKY), 71–110 (HHND…CMST), 113–152 (THRD…ALTA), 164–203 (GSKD…RSMK), 206–245 (GHTE…CIQT), 248–287 (VHKE…NKML), 290–329 (EEKA…RCTL), and 349–388 (KGGA…KKEE). The disordered stretch occupies residues 591 to 615 (ETTPSGGNANNSLQNSQSDANSEGS).

It belongs to the WD repeat WDR48 family. As to quaternary structure, catalytic component of the Usp12-46 deubiquitylase complex consisting of Usp12-46, Wdr20 and Uaf1; regulatory subunit that, together wtih Wdr20, stabilizes Usp12-46. The Usp12-46 deubiquitylase complex associates with arr/arrow; the interaction leads to deubiquitination and stabilization of arr/arrow.

Functionally, regulatory component of the Usp12-46 deubiquitylase complex. activates deubiquitination by increasing the catalytic turnover without increasing the affinity of deubiquitinating enzymes for the substrate. The complex deubiquitylates the wg/wingless-signaling receptor arr/arrow, which stabilizes the receptor and increases its concentration at the cell surface; this enhances the sensitivity of cells to wg/wingless-signal stimulation. This increases the amplitude and spatial range of the signaling response to the wg/wingless morphogen gradient, facilitating the precise concentration-dependent regulation of its target genes. Together with Wdr20 and Usp12-46 required for wg/wingless-mediated signaling in the wing imaginal disc and for wg/wingless-dependent regulation of intestinal stem cell proliferation. This Drosophila virilis (Fruit fly) protein is WD repeat-containing protein 48 homolog.